A 261-amino-acid polypeptide reads, in one-letter code: LIM and SH3 domain protein 1 (261 aa).

N-acetylmethionine is present on Met1. Positions 5 to 56 constitute an LIM zinc-binding domain; that stretch reads CARCGKIVYPTEKVNCLDKFWHKACFHCETCKMTLNMKNYKGYEKKPYCNAH. An N6-acetyllysine modification is found at Lys42. Nebulin repeat units lie at residues 61 to 95 and 97 to 131; these read SFTMVADTPENLRLKQQSELQSQVRYKEEFEKNKG and GFSVVADTPELQRIKKTQDQISNIKYHEEFEKSRM. Residue Thr68 is modified to Phosphothreonine. At Lys75 the chain carries N6-methyllysine. Ser99 carries the post-translational modification Phosphoserine. Thr104 bears the Phosphothreonine mark. Positions 111–186 are disordered; sequence KKTQDQISNI…QPVAQSYGGY (76 aa). Residue Lys112 is modified to N6-succinyllysine. Ser118 carries the phosphoserine modification. The span at 121–130 shows a compositional bias: basic and acidic residues; that stretch reads KYHEEFEKSR. Phosphoserine is present on residues Ser134 and Ser146. Low complexity predominate over residues 167 to 183; it reads SAPVYQQPQQQPVAQSY. Residues 202-261 enclose the SH3 domain; sequence GGGKRYRAVYDYSAADEDEVSFQDGDTIVNVQQIDDGWMYGTVERTGDTGMLPANYVEAI.

Interacts with F-actin. Interacts with ANKRD54. Interacts with KBTBD10.

Its subcellular location is the cytoplasm. It localises to the cell cortex. It is found in the cytoskeleton. Plays an important role in the regulation of dynamic actin-based, cytoskeletal activities. Agonist-dependent changes in LASP1 phosphorylation may also serve to regulate actin-associated ion transport activities, not only in the parietal cell but also in certain other F-actin-rich secretory epithelial cell types. In Homo sapiens (Human), this protein is LIM and SH3 domain protein 1 (LASP1).